The chain runs to 916 residues: Internalin J (916 aa).

The signal sequence occupies residues 1–25 (MKTSKIIIASLVSLTLVSNPILTFA). LRR repeat units follow at residues 94-115 (TLTS…EKLT), 116-136 (GLTK…SQNT), 137-157 (NLTY…TPLT), 158-179 (KLTY…QNPL), 180-200 (LTYL…HNTQ), 201-221 (LTEL…TPQT), 222-243 (QLTT…QNKL), 244-263 (LNRL…NQNI), 264-284 (QLTF…TPLT), 285-306 (QLTY…TLSK), 316-325 (DLLEIDLTHN), 338-357 (KIKE…DCQA), 359-368 (GITELDLSQN), and 380-402 (ELTK…NAHI). MucBP domains lie at 506–568 (PIKG…SQSV), 576–638 (IVAA…SQTV), 646–708 (IVAA…AQTV), 717–779 (APEK…SQTV), and 787–849 (IVAA…AQTV). Residues 862–888 (PLPDKKTTKPSNLKTTEVKKASDTLPK) are disordered. An LPXTG sorting signal motif is present at residues 886-890 (LPKTG). A Pentaglycyl murein peptidoglycan amidated threonine modification is found at T889. Positions 890 to 916 (GDSTPWKSALLGVFLSSTALVIWKKKK) are cleaved as a propeptide — removed by sortase.

Belongs to the internalin family.

It is found in the secreted. It localises to the cell wall. Its function is as follows. Involved in several steps of L.monocytogenes infection, probably improves adhesin to host cells. The protein is Internalin J (inlJ) of Listeria monocytogenes serotype 4b (strain F2365).